The chain runs to 543 residues: MRHSLPYRMLRKRPMKLSTTVILMVSAVLFSVLLVVHLIYFSQISDMTRDGLANKALAVARTLADSPEIRQGLQKKPQESGIQAIAEAVRKRNDLLFIVVTDMHSLRYSHPEAQRIGQPFKGDDILKALNGEENVAINRGFLAQALRVFTPIYDENHKQIGVVAIGLELSRVTQQINDSRWSIIWSVLFGMLVGLIGTCILVNVLKKILFGLEPYEISTLFEQRQAMLQSIKEGVVAVDDRGEVTLINDAAQELLNYRKSQDDEKLSTLSHSWSQVVDVSEVLRDGTPRRDEEITIKDRLLLINTVPVRSNGVIIGAISTFRDKTEVRKLMQRLDGLVNYADALRERSHEFMNKLHVILGLLHLKSYKQLEDYILKTANNYQEEIGSLLGKIKSPVIAGFLISKINRATDLGHTLILNSESQLPDSGSEDQVATLITTLGNLIENALEALGPEPGGEISVTLHYRHGWLHCEVNDDGPGIAPDKIDHIFDKGVSTKGSERGVGLALVKQQVENLGGSIAVESEPGIFTQFFVQIPWDGERSNR.

At 1–20 (MRHSLPYRMLRKRPMKLSTT) the chain is on the cytoplasmic side. Residues 21–41 (VILMVSAVLFSVLLVVHLIYF) form a helical membrane-spanning segment. Over 42-181 (SQISDMTRDG…VTQQINDSRW (140 aa)) the chain is Periplasmic. Residues 107 to 110 (RYSH), K121, 140 to 142 (GFL), and R147 each bind (R)-malate. Residues 182-202 (SIIWSVLFGMLVGLIGTCILV) traverse the membrane as a helical segment. Residues 203–543 (NVLKKILFGL…IPWDGERSNR (341 aa)) are Cytoplasmic-facing. The region spanning 212–323 (LEPYEISTLF…IIGAISTFRD (112 aa)) is the PAS domain. Residues 346–538 (ERSHEFMNKL…QFFVQIPWDG (193 aa)) enclose the Histidine kinase domain. H349 is modified (phosphohistidine; by autocatalysis).

In terms of assembly, homodimer. Post-translationally, autophosphorylated. The phosphoryl group is rapidly transferred to DcuR.

It is found in the cell inner membrane. The catalysed reaction is ATP + protein L-histidine = ADP + protein N-phospho-L-histidine.. Its function is as follows. Member of the two-component regulatory system DcuR/DcuS. Involved in the C4-dicarboxylate-stimulated regulation of the genes encoding the anaerobic fumarate respiratory system (frdABCD; nuoAN; dcuB; sdhCDAB; etc.). Weakly regulates the aerobic C4-dicarboxylate transporter dctA. Activates DcuR by phosphorylation. This is Sensor histidine kinase DcuS (dcuS) from Escherichia coli O6:H1 (strain CFT073 / ATCC 700928 / UPEC).